The sequence spans 159 residues: Ubiquitin-conjugating enzyme E2 variant 1B (159 aa).

Residues 11-159 form the UBC core domain; sequence PRNFRLLEEL…KGLVVKCCVM (149 aa).

The protein belongs to the ubiquitin-conjugating enzyme family. As to quaternary structure, heterodimer with UBC35 or UBC36. Expressed in roots, shoots, leaves, stems and flowers, but not in pollen.

In terms of biological role, has no ubiquitin ligase activity on its own. The heterodimer with UBC catalyzes the synthesis of non-canonical poly-ubiquitin chains that are linked through 'Lys-63'. This type of poly-ubiquitination does not lead to protein degradation by the proteasome. Mediates transcriptional activation of target genes. May play a role in the control of progress through the cell cycle and differentiation. May play a role in the error-free DNA repair pathway and contributes to the survival of cells after DNA damage. In Arabidopsis thaliana (Mouse-ear cress), this protein is Ubiquitin-conjugating enzyme E2 variant 1B (UEV1B).